The sequence spans 88 residues: Small ribosomal subunit protein bS20 (88 aa).

The protein belongs to the bacterial ribosomal protein bS20 family.

Functionally, binds directly to 16S ribosomal RNA. The polypeptide is Small ribosomal subunit protein bS20 (Blochmanniella floridana).